The following is a 307-amino-acid chain: Isethionate sulfite-lyase activating enzyme (307 aa).

One can recognise a Radical SAM core domain in the interval 22–307 (HDGPGIRTVV…EAVVAQTADS (286 aa)). Residues cysteine 36, cysteine 40, cysteine 43, cysteine 62, cysteine 68, cysteine 71, cysteine 75, cysteine 95, cysteine 98, cysteine 102, and cysteine 106 each coordinate [4Fe-4S] cluster. 42-44 (WCS) provides a ligand contact to S-adenosyl-L-methionine. 2 4Fe-4S ferredoxin-type domains span residues 53 to 85 (VELA…RAED) and 86 to 117 (DTIS…YGAH). S-adenosyl-L-methionine contacts are provided by residues glycine 146, 195 to 197 (DIK), and histidine 268.

It belongs to the organic radical-activating enzymes family. As to quaternary structure, monomer. It depends on [4Fe-4S] cluster as a cofactor.

It catalyses the reaction glycyl-[protein] + reduced [flavodoxin] + S-adenosyl-L-methionine = glycin-2-yl radical-[protein] + semiquinone [flavodoxin] + 5'-deoxyadenosine + L-methionine + H(+). Its pathway is organosulfur degradation; alkanesulfonate degradation. Its function is as follows. Involved in an anaerobic respiration pathway that converts the sulfonate isethionate (2-hydroxyethanesulfonate) to ammonia, acetate and sulfide. Catalyzes activation of the isethionate sulfite-lyase IseG under anaerobic conditions by generation of an organic free radical on a glycine residue, via a homolytic cleavage of S-adenosyl-L-methionine (SAM). In Nitratidesulfovibrio vulgaris (strain ATCC 29579 / DSM 644 / CCUG 34227 / NCIMB 8303 / VKM B-1760 / Hildenborough) (Desulfovibrio vulgaris), this protein is Isethionate sulfite-lyase activating enzyme.